Consider the following 320-residue polypeptide: Cytochrome f (320 aa).

The first 35 residues, 1–35, serve as a signal peptide directing secretion; it reads MQTRNTFSWIREEITRSISVSLMIYIITWASISSA. Positions 36, 56, 59, and 60 each coordinate heme. The helical transmembrane segment at 286–306 threads the bilayer; the sequence is VQGLLFFLGSVVLAQIFLVLK.

It belongs to the cytochrome f family. As to quaternary structure, the 4 large subunits of the cytochrome b6-f complex are cytochrome b6, subunit IV (17 kDa polypeptide, petD), cytochrome f and the Rieske protein, while the 4 small subunits are PetG, PetL, PetM and PetN. The complex functions as a dimer. Heme is required as a cofactor.

The protein resides in the plastid. It is found in the chloroplast thylakoid membrane. Functionally, component of the cytochrome b6-f complex, which mediates electron transfer between photosystem II (PSII) and photosystem I (PSI), cyclic electron flow around PSI, and state transitions. The polypeptide is Cytochrome f (Lepidium virginicum (Virginia pepperweed)).